Reading from the N-terminus, the 620-residue chain is MAU2 chromatid cohesion factor homolog (620 aa).

TPR repeat units lie at residues 90-123 (FDTASLLAQLYQQQEQSSLAKPVLRKAIELSQHN), 445-478 (GSFYYVQGLNAFHKSSFHEAKRFLRETLKMANAE), and 485-518 (SCSLVLLSHVFLSIGNSKESMNMVTPAMQLASKI).

Belongs to the SCC4/mau-2 family. As to quaternary structure, component of the cohesin loading complex.

The protein resides in the nucleus. It is found in the nucleoplasm. Its function is as follows. Required for association of the cohesin complex with chromatin during interphase. Plays a role in sister chromatid cohesion and normal progression through prometaphase. This is MAU2 chromatid cohesion factor homolog from Aedes aegypti (Yellowfever mosquito).